A 422-amino-acid chain; its full sequence is MRSVLSLALLAVNVVTAAVVAPFDYSGYKVIRVPTQKDNVKEVQRIITDLNLDTWKYPKSEGQNADIVVPPSQISSFMERISGMNIEMMHEDLGLSIRNETSFEAYSAGYAPDINWFKSYHSYQDHLSYLQDLQGLFRTRSEYVDAGKSHEGRTIPALHIWGSGGKNSKPAIIFHGTIHAREWITTMVTEYMAWSFLSQYNKNADITSIVDNFDIWIFPIVNPDGFAFTQTSNRLWRKNRQPNPNARCPGRDLNRNYPYQWVGPGSSSNPCSDTYRGAQPGDGTEIKVHIANMKKIAANKGIAMFVDWHSYGQLFMSPYGYSCTARPPTDARHQELSRIFAQALKAVHGTPYKTGPICNTIYQVNGDSVDYALEVLKVKLSLTAELRDTGARGFVLPADQIIPSGEETLAGTVAMLKAVIQG.

Residues 1–17 (MRSVLSLALLAVNVVTA) form the signal peptide. A propeptide spans 18–112 (AVVAPFDYSG…FEAYSAGYAP (95 aa)) (activation peptide). The Peptidase M14 domain occupies 119–419 (SYHSYQDHLS…AGTVAMLKAV (301 aa)). 2 residues coordinate Zn(2+): His179 and Glu182. Residues 179-182 (HARE), Arg237, and 254-255 (NR) each bind substrate. Cysteines 248 and 271 form a disulfide. Zn(2+) is bound at residue His309. A substrate-binding site is contributed by 310–311 (SY). Glu385 acts as the Proton donor/acceptor in catalysis.

The protein belongs to the peptidase M14 family. The cofactor is Zn(2+).

Its subcellular location is the secreted. Functionally, extracellular metalloprotease that contributes to pathogenicity. The protein is Probable metallocarboxypeptidase A (MCPA) of Trichophyton verrucosum (strain HKI 0517).